The sequence spans 396 residues: Phosphoglycerate kinase (396 aa).

Residues 21–23 (DLN), Arg36, 59–62 (HFDR), Arg118, and Arg151 contribute to the substrate site. ATP contacts are provided by residues Lys201, Glu323, and 353 to 356 (GGDT).

Belongs to the phosphoglycerate kinase family. Monomer.

It localises to the cytoplasm. It carries out the reaction (2R)-3-phosphoglycerate + ATP = (2R)-3-phospho-glyceroyl phosphate + ADP. It functions in the pathway carbohydrate degradation; glycolysis; pyruvate from D-glyceraldehyde 3-phosphate: step 2/5. This Granulibacter bethesdensis (strain ATCC BAA-1260 / CGDNIH1) protein is Phosphoglycerate kinase.